The sequence spans 456 residues: Phospholipase A1 member A (456 aa).

Positions Met1–Gly25 are cleaved as a signal peptide. N-linked (GlcNAc...) asparagine glycosylation occurs at Asn79. Ser166 functions as the Nucleophile in the catalytic mechanism. Asp190 functions as the Charge relay system in the catalytic mechanism. Cys245 and Cys258 form a disulfide bridge. His260 serves as the catalytic Charge relay system. 2 cysteine pairs are disulfide-bonded: Cys282–Cys293 and Cys296–Cys304. The N-linked (GlcNAc...) asparagine glycan is linked to Asn365. Residues Ile374–Val456 form an involved in the recognition of diacyl-phospholipids region.

It belongs to the AB hydrolase superfamily. Lipase family. Widely expressed. Expressed in placenta, prostate and liver. Weakly or not expressed in skin, leukocytes, platelets, colon, spleen, lung, muscle and kidney.

Its subcellular location is the secreted. The enzyme catalyses a 1,2-diacyl-sn-glycero-3-phospho-L-serine + H2O = a 2-acyl-sn-glycero-3-phospho-L-serine + a fatty acid + H(+). It carries out the reaction 1,2-di-(9Z)-octadecenoyl-sn-glycero-3-phospho-L-serine + H2O = 2-(9Z-octadecenoyl)-sn-glycero-3-phospho-L-serine + (9Z)-octadecenoate + H(+). It catalyses the reaction 1-hexadecanoyl-2-(5Z,8Z,11Z,14Z-eicosatetraenoyl)-sn-glycero-3-phospho-L-serine + H2O = 2-(5Z,8Z,11Z,14Z)-eicosatetraenoyl-sn-glycero-3-phospho-L-serine + hexadecanoate + H(+). The catalysed reaction is a 1-acyl-sn-glycero-3-phospho-L-serine + H2O = sn-glycero-3-phospho-L-serine + a fatty acid + H(+). The enzyme catalyses 1-(9Z-octadecenoyl)-sn-glycero-3-phospho-L-serine + H2O = sn-glycero-3-phospho-L-serine + (9Z)-octadecenoate + H(+). Functionally, hydrolyzes the ester bond of the acyl group attached at the sn-1 position of phosphatidylserines (phospholipase A1 activity) and 1-acyl-2-lysophosphatidylserines (lysophospholipase activity) in the pathway of phosphatidylserines acyl chain remodeling. Cleaves phosphatidylserines exposed on the outer leaflet of the plasma membrane of apoptotic cells producing 2-acyl-1-lysophosphatidylserines, which in turn enhance mast cell activation and histamine production. Has no activity toward other glycerophospholipids including phosphatidylcholines, phosphatidylethanolamines, phosphatidic acids or phosphatidylinositols, or glycerolipids such as triolein. Its function is as follows. Hydrolyzes lyso-PS but not PS. This is Phospholipase A1 member A from Homo sapiens (Human).